A 110-amino-acid chain; its full sequence is Flagellar hook-basal body complex protein FliE (110 aa).

The protein belongs to the FliE family.

It localises to the bacterial flagellum basal body. This is Flagellar hook-basal body complex protein FliE from Pseudomonas putida (strain GB-1).